Reading from the N-terminus, the 69-residue chain is U2-agatoxin-Ao1z (69 aa).

The N-terminal stretch at 1–20 (MRAIISLLLISAMVFSMIEA) is a signal peptide. The propeptide occupies 21–34 (VPVEEGLQLFEGER). Intrachain disulfides connect Cys-37-Cys-53, Cys-44-Cys-58, and Cys-52-Cys-68.

Belongs to the neurotoxin 01 (U2-agtx) family. In terms of tissue distribution, expressed by the venom gland.

It localises to the secreted. Insect active toxin causing rapid but reversible paralysis in crickets. No activity shown in mammals. Does not show effect on mammalian voltage-gated calcium channels. In Agelena orientalis (Funnel-web spider), this protein is U2-agatoxin-Ao1z.